Reading from the N-terminus, the 204-residue chain is Probable GTP-binding protein EngB (204 aa).

Residues 27 to 201 form the EngB-type G domain; that stretch reads SGIEIAFAGR…SEKLDQWFSP (175 aa). Residues 35-42, 62-66, 80-83, 147-150, and 180-182 each bind GTP; these read GRSNAGKS, GRTQL, DLPG, TKAD, and FSA. Mg(2+)-binding residues include S42 and T64.

Belongs to the TRAFAC class TrmE-Era-EngA-EngB-Septin-like GTPase superfamily. EngB GTPase family. Mg(2+) serves as cofactor.

Its function is as follows. Necessary for normal cell division and for the maintenance of normal septation. The polypeptide is Probable GTP-binding protein EngB (Histophilus somni (strain 129Pt) (Haemophilus somnus)).